The sequence spans 276 residues: Lipoyl synthase (276 aa).

7 residues coordinate [4Fe-4S] cluster: C27, C32, C38, C53, C57, C60, and S266. In terms of domain architecture, Radical SAM core spans 39 to 255; the sequence is FGNKTATFMI…EEIGYEMGFK (217 aa).

This sequence belongs to the radical SAM superfamily. Lipoyl synthase family. The cofactor is [4Fe-4S] cluster.

The protein resides in the cytoplasm. It carries out the reaction [[Fe-S] cluster scaffold protein carrying a second [4Fe-4S](2+) cluster] + N(6)-octanoyl-L-lysyl-[protein] + 2 oxidized [2Fe-2S]-[ferredoxin] + 2 S-adenosyl-L-methionine + 4 H(+) = [[Fe-S] cluster scaffold protein] + N(6)-[(R)-dihydrolipoyl]-L-lysyl-[protein] + 4 Fe(3+) + 2 hydrogen sulfide + 2 5'-deoxyadenosine + 2 L-methionine + 2 reduced [2Fe-2S]-[ferredoxin]. Its pathway is protein modification; protein lipoylation via endogenous pathway; protein N(6)-(lipoyl)lysine from octanoyl-[acyl-carrier-protein]: step 2/2. Catalyzes the radical-mediated insertion of two sulfur atoms into the C-6 and C-8 positions of the octanoyl moiety bound to the lipoyl domains of lipoate-dependent enzymes, thereby converting the octanoylated domains into lipoylated derivatives. The chain is Lipoyl synthase from Aquifex aeolicus (strain VF5).